The chain runs to 141 residues: Hemoglobin subunit mu (141 aa).

One can recognise a Globin domain in the interval 1-141; the sequence is MLSAQERAQI…VAVVLTEKYR (141 aa). Positions 58 and 87 each coordinate heme b.

The protein belongs to the globin family. In terms of tissue distribution, expressed in erythroid tissues.

The sequence is that of Hemoglobin subunit mu (HBM) from Homo sapiens (Human).